The following is a 296-amino-acid chain: uncharacterized protein (296 aa).

The N-terminal 57 residues, 1–57 (MTSFLSFSAISAHPPTFSGASFRPRSFSPRLFKSCVKCTYAEAGLSSASWSAPIDIV), are a transit peptide targeting the chloroplast.

This sequence belongs to the NAD(P)-dependent epimerase/dehydratase family.

Its subcellular location is the plastid. The protein localises to the chloroplast. It localises to the plastoglobule. This is an uncharacterized protein from Arabidopsis thaliana (Mouse-ear cress).